The chain runs to 310 residues: Porphobilinogen deaminase (310 aa).

Cys-242 bears the S-(dipyrrolylmethanemethyl)cysteine mark.

It belongs to the HMBS family. In terms of assembly, monomer. Dipyrromethane is required as a cofactor.

The enzyme catalyses 4 porphobilinogen + H2O = hydroxymethylbilane + 4 NH4(+). It participates in porphyrin-containing compound metabolism; protoporphyrin-IX biosynthesis; coproporphyrinogen-III from 5-aminolevulinate: step 2/4. Its function is as follows. Tetrapolymerization of the monopyrrole PBG into the hydroxymethylbilane pre-uroporphyrinogen in several discrete steps. The polypeptide is Porphobilinogen deaminase (Shewanella baltica (strain OS155 / ATCC BAA-1091)).